Reading from the N-terminus, the 115-residue chain is MWYSDYHVWILPVHERVVRLGLTEKMQKNLGAILHVDLPSVGSLCKEGEVLVILESSKSAIEVLSPVSGEVIDINLDLVDNPQKINEAPEGEGWLAVVRLDQDWDPSNLSLMDEE.

In terms of domain architecture, Lipoyl-binding spans 17 to 99 (VVRLGLTEKM…EGEGWLAVVR (83 aa)). At K58 the chain carries N6-lipoyllysine.

It belongs to the GcvH family. The cofactor is (R)-lipoate.

This Chlamydia pneumoniae (Chlamydophila pneumoniae) protein is Glycine cleavage system H-like protein.